Reading from the N-terminus, the 326-residue chain is GMP reductase (326 aa).

C175 acts as the Thioimidate intermediate in catalysis. NADP(+) is bound at residue 204-227 (IIADGGIRTHGDIAKSVRFGATMV).

The protein belongs to the IMPDH/GMPR family. GuaC type 2 subfamily.

It catalyses the reaction IMP + NH4(+) + NADP(+) = GMP + NADPH + 2 H(+). In terms of biological role, catalyzes the irreversible NADPH-dependent deamination of GMP to IMP. It functions in the conversion of nucleobase, nucleoside and nucleotide derivatives of G to A nucleotides, and in maintaining the intracellular balance of A and G nucleotides. In Bacillus licheniformis (strain ATCC 14580 / DSM 13 / JCM 2505 / CCUG 7422 / NBRC 12200 / NCIMB 9375 / NCTC 10341 / NRRL NRS-1264 / Gibson 46), this protein is GMP reductase.